The sequence spans 520 residues: UBX domain-containing protein 11 (520 aa).

Positions 1-26 are disordered; sequence MSSPLASLSKTRKVPLPSEPMNPGRR. Residues 76 to 149 adopt a coiled-coil conformation; that stretch reads MAFMTRKLWD…VREMERFLSD (74 aa). One can recognise an SEP domain in the interval 230 to 294; it reads LEPIPLKLYR…VSDLRNQVYL (65 aa). In terms of domain architecture, UBX spans 392–469; the sequence is PAPPLSMLRI…GLVPKAALLL (78 aa). The segment at 476-520 is disordered; the sequence is KSSLKFSPGPCPGPGPGPSPGPGPGPSPGPGPGPSPCPGPSPSPQ. Residues 484–520 are compositionally biased toward pro residues; sequence GPCPGPGPGPSPGPGPGPSPGPGPGPSPCPGPSPSPQ. 3 repeat units span residues 487 to 494, 495 to 502, and 503 to 510. Residues 487–510 form a 3 X 8 AA tandem repeats of P-G-P-G-P-G-P-S region; sequence PGPGPGPSPGPGPGPSPGPGPGPS.

As to quaternary structure, interacts with GNA12, GNA13, RND1, RND2 and RND3.

It is found in the cytoplasm. Its subcellular location is the cytoskeleton. In terms of biological role, may be involved in the reorganization of actin cytoskeleton mediated by RND1, RND2 and RND3. Promotes RHOA activation mediated by GNA12 and GNA13. The protein is UBX domain-containing protein 11 (UBXN11) of Homo sapiens (Human).